The sequence spans 349 residues: MAKTPESLESSINEITDRALDRDCTTLSRHVLQQLQSFSPDAQDLSALMNRIALAGKLVARRMSRAGLMEGVLGFTGEVNVQGESVKKMDVYANDVFISVFKQSGLVCRLASEEMENPYYIPENCPIGRYTLLYDPIDGSSNTDNNLSLGSIFAIRQQEGTDSDGKATDLLANGRKQLAAGYILYGPCTMLVYTIGKGVHSFVLDPSLGEFILTEENIRIPNHGSVYSVNEGNFWQWEESIREYIRYVHRTEGYSARYSGAMVSDIHRILVQGGVFLYPGTIQNPEGKLRLLYETAPLAFLIEQAGGRATTGLVNILDVVPKKLHQRTPLIIGSKEDVAKVESFIQNGH.

Positions 113, 135, 137, and 138 each coordinate Mg(2+). Residues 138 to 141, N230, Y258, and K288 each bind substrate; that span reads DGSS. Residue E294 participates in Mg(2+) binding.

This sequence belongs to the FBPase class 1 family. Homotetramer. Requires Mg(2+) as cofactor.

It localises to the cytoplasm. The catalysed reaction is beta-D-fructose 1,6-bisphosphate + H2O = beta-D-fructose 6-phosphate + phosphate. The protein operates within carbohydrate biosynthesis; Calvin cycle. The sequence is that of Fructose-1,6-bisphosphatase class 1 from Nostoc punctiforme (strain ATCC 29133 / PCC 73102).